The sequence spans 321 residues: Probable arabinan endo-1,5-alpha-L-arabinosidase C (321 aa).

The first 20 residues, 1–20 (MYLYTLILLFLASVNVNAYA), serve as a signal peptide directing secretion. The Proton acceptor role is filled by Asp33. N-linked (GlcNAc...) asparagine glycosylation is found at Asn75 and Asn192. The active-site Proton donor is Glu200. Asn224 is a glycosylation site (N-linked (GlcNAc...) asparagine).

Belongs to the glycosyl hydrolase 43 family.

It localises to the secreted. The catalysed reaction is Endohydrolysis of (1-&gt;5)-alpha-arabinofuranosidic linkages in (1-&gt;5)-arabinans.. The protein operates within glycan metabolism; L-arabinan degradation. Functionally, endo-1,5-alpha-L-arabinanase involved in degradation of pectin. Its preferred substrate is linear 1,5-alpha-L-arabinan. The polypeptide is Probable arabinan endo-1,5-alpha-L-arabinosidase C (abnC) (Neosartorya fischeri (strain ATCC 1020 / DSM 3700 / CBS 544.65 / FGSC A1164 / JCM 1740 / NRRL 181 / WB 181) (Aspergillus fischerianus)).